Consider the following 544-residue polypeptide: GDP-mannose 4,6-dehydratase sdnI (544 aa).

NADP(+)-binding positions include Gly16–Asp21, Arg41, Asp64–Met65, and Leu86–Ser90. Ser90 lines the substrate pocket. Active-site nucleophile residues include Glu135 and Tyr157. A substrate-binding site is contributed by Tyr157. Residue Lys161 coordinates NADP(+). Substrate is bound at residue Asn186. NADP(+) contacts are provided by His187 and Arg192. Substrate is bound by residues Arg192–Lys200, Gly219, Arg225, and Arg303–Glu306. Residues Gly366–Val406 are disordered. 2 stretches are compositionally biased toward polar residues: residues Thr368–Gly381 and Gly389–Ser404.

This sequence belongs to the NAD(P)-dependent epimerase/dehydratase family. GDP-mannose 4,6-dehydratase subfamily. NADP(+) is required as a cofactor.

It catalyses the reaction GDP-alpha-D-mannose = GDP-4-dehydro-alpha-D-rhamnose + H2O. Its pathway is antibiotic biosynthesis. GDP-mannose 4,6-dehydratase; part of the gene cluster that mediates the biosynthesis of sordarin and hypoxysordarin, glycoside antibiotics with a unique tetracyclic diterpene aglycone structure. First, the geranylgeranyl diphosphate synthase sdnC constructs GGDP from farnesyl diphosphate and isopentenyl diphosphate. The diterpene cyclase sdnA then catalyzes the cyclization of GGDP to afford cycloaraneosene. Cycloaraneosene is then hydroxylated four times by the putative cytochrome P450 monooxygenases sdnB, sdnE, sdnF and sdnH to give a hydroxylated cycloaraneosene derivative such as cycloaraneosene-8,9,13,19-tetraol. Although the order of the hydroxylations is unclear, at least C8, C9 and C13 of the cycloaraneosene skeleton are hydroxylated before the sordaricin formation. Dehydration of the 13-hydroxy group of the hydroxylated cycloaraneosene derivative might be catalyzed by an unassigned hypothetical protein such as sdnG and sdnP to construct the cyclopentadiene moiety. The FAD-dependent oxidoreductase sdnN is proposed to catalyze the oxidation at C9 of the hydroxylated cycloaraneosene derivative and also catalyze the Baeyer-Villiger oxidation to give the lactone intermediate. The presumed lactone intermediate would be hydrolyzed to give an acrolein moiety and a carboxylate moiety. Then, [4+2]cycloaddition would occur between the acrolein moiety and the cyclopentadiene moiety to give sordaricin. SdnN might also be involved in the [4+2]cycloaddition after the hypothesized oxidation to accommodate the oxidized product and prompt the [4+2]cycloaddition. GDP-6-deoxy-D-altrose may be biosynthesized from GDP-D-mannose by the putative GDP-mannose-4,6-dehydratase sdnI and the short-chain dehydrogenase sdnK. The glycosyltransferase sdnJ catalyzes the attachment of 6-deoxy-D-altrose onto the 19-hydroxy group of sordaricin to give 4'-O-demethylsordarin. The methyltransferase sdnD would complete the biosynthesis of sordarin. Sordarin can be further modified into hypoxysordarin. The unique acyl chain at the 3'-hydroxy group of hypoxysordarin would be constructed by an iterative type I PKS sdnO and the trans-acting polyketide methyltransferase sdnL. SdnL would be responsible for the introduction of an alpha-methyl group of the polyketide chain. Alternatively, the beta-lactamase-like protein sdnR might be responsible for the cleavage and transfer of the polyketide chain from the PKS sdnO to sordarin. Two putative cytochrome P450 monooxygenases, sdnQ and sdnT, might catalyze the epoxidations of the polyketide chain to complete the biosynthesis of hypoxysordarin. Transcriptional regulators sdnM and sdnS are presumably encoded for the transcriptional regulation of the expression of the sdn gene cluster. The protein is GDP-mannose 4,6-dehydratase sdnI of Sordaria araneosa (Pleurage araneosa).